Here is a 92-residue protein sequence, read N- to C-terminus: DNA-binding protein HU (92 aa).

This sequence belongs to the bacterial histone-like protein family. In terms of assembly, homodimer.

Its function is as follows. Histone-like DNA-binding protein which is capable of wrapping DNA to stabilize it, and thus to prevent its denaturation under extreme environmental conditions. This is DNA-binding protein HU (hup) from Buchnera aphidicola subsp. Acyrthosiphon pisum (strain APS) (Acyrthosiphon pisum symbiotic bacterium).